The chain runs to 692 residues: Serine/threonine-protein phosphatase PP-Z1 (692 aa).

Disordered regions lie at residues 1–309 and 321–357; these read MGNS…DIEN and ENVN…PKKF. G2 carries the N-myristoyl glycine lipid modification. Composition is skewed to low complexity over residues 32–41, 49–69, and 91–122; these read SHSVKSAKSN, SLPS…STPS, and SSSH…RRSS. The residue at position 49 (S49) is a Phosphoserine. The segment covering 170–179 has biased composition (acidic residues); that stretch reads LTDDDNDDKD. At T171 the chain carries Phosphothreonine. A compositionally biased stretch (low complexity) spans 190 to 204; it reads RSSNSRPSSIRSGSV. The segment covering 207–216 has biased composition (basic and acidic residues); that stretch reads RKSDVTHEEP. 2 positions are modified to phosphoserine: S209 and S222. 2 stretches are compositionally biased toward polar residues: residues 217–229 and 251–267; these read NNGS…QENY and FGSD…NSPG. T261 is modified (phosphothreonine). S265 carries the phosphoserine modification. The span at 280–289 shows a compositional bias: low complexity; that stretch reads TSNSTSSLNH. Residues 291-303 are compositionally biased toward basic and acidic residues; that stretch reads SSRDIYPSKHISN. The span at 321–331 shows a compositional bias: polar residues; that stretch reads ENVNDKNNNIT. The Mn(2+) site is built by D419, H421, D447, and N479. The Proton donor role is filled by H480. Positions 528 and 603 each coordinate Mn(2+). The tract at residues 672–692 is disordered; it reads LANQQQQMMETSITNDNESQQ. The span at 673–692 shows a compositional bias: polar residues; it reads ANQQQQMMETSITNDNESQQ. A Phosphoserine modification is found at S690.

Belongs to the PPP phosphatase family. PP-Z subfamily. As to quaternary structure, interacts with SIS2 and VHS3, which regulate its activity. The cofactor is Mn(2+).

It catalyses the reaction O-phospho-L-seryl-[protein] + H2O = L-seryl-[protein] + phosphate. The enzyme catalyses O-phospho-L-threonyl-[protein] + H2O = L-threonyl-[protein] + phosphate. With respect to regulation, inhibited by the regulatory subunits VHS3 and SIS2. In terms of biological role, essential for the maintenance of cell size and integrity in response to osmotic stress. This is Serine/threonine-protein phosphatase PP-Z1 (PPZ1) from Saccharomyces cerevisiae (strain ATCC 204508 / S288c) (Baker's yeast).